The following is a 425-amino-acid chain: Glutamate-1-semialdehyde 2,1-aminomutase (425 aa).

The residue at position 264 (K264) is an N6-(pyridoxal phosphate)lysine.

It belongs to the class-III pyridoxal-phosphate-dependent aminotransferase family. HemL subfamily. In terms of assembly, homodimer. The cofactor is pyridoxal 5'-phosphate.

Its subcellular location is the cytoplasm. The catalysed reaction is (S)-4-amino-5-oxopentanoate = 5-aminolevulinate. Its pathway is porphyrin-containing compound metabolism; protoporphyrin-IX biosynthesis; 5-aminolevulinate from L-glutamyl-tRNA(Glu): step 2/2. The protein is Glutamate-1-semialdehyde 2,1-aminomutase of Leptospira biflexa serovar Patoc (strain Patoc 1 / Ames).